The sequence spans 334 residues: Probable fructose-bisphosphate aldolase class 1 (334 aa).

Belongs to the class I fructose-bisphosphate aldolase family.

The enzyme catalyses beta-D-fructose 1,6-bisphosphate = D-glyceraldehyde 3-phosphate + dihydroxyacetone phosphate. It functions in the pathway carbohydrate degradation; glycolysis; D-glyceraldehyde 3-phosphate and glycerone phosphate from D-glucose: step 4/4. The protein is Probable fructose-bisphosphate aldolase class 1 of Xanthomonas axonopodis pv. citri (strain 306).